A 272-amino-acid polypeptide reads, in one-letter code: HMP-PP phosphatase (272 aa).

Asp-8 functions as the Nucleophile in the catalytic mechanism. Positions 8, 10, and 212 each coordinate Mg(2+).

Belongs to the HAD-like hydrolase superfamily. Cof family. The cofactor is Mg(2+).

The enzyme catalyses 4-amino-2-methyl-5-(diphosphooxymethyl)pyrimidine + H2O = 4-amino-2-methyl-5-(phosphooxymethyl)pyrimidine + phosphate + H(+). Catalyzes the hydrolysis of 4-amino-2-methyl-5-hydroxymethylpyrimidine pyrophosphate (HMP-PP) to 4-amino-2-methyl-5-hydroxymethylpyrimidine phosphate (HMP-P). The protein is HMP-PP phosphatase of Salmonella newport (strain SL254).